A 317-amino-acid chain; its full sequence is Proline iminopeptidase (317 aa).

The 256-residue stretch at 41 to 296 (VFIHGGPGGG…ELHIVEGAGH (256 aa)) folds into the AB hydrolase-1 domain. Ser113 acts as the Nucleophile in catalysis. Asp268 is an active-site residue. Catalysis depends on His296, which acts as the Proton donor.

Belongs to the peptidase S33 family. As to quaternary structure, monomer.

The protein resides in the cytoplasm. It carries out the reaction Release of N-terminal proline from a peptide.. Functionally, specifically catalyzes the removal of N-terminal proline residues from peptides. This is Proline iminopeptidase (pip) from Serratia marcescens.